Here is a 540-residue protein sequence, read N- to C-terminus: Phenylalanine--tRNA ligase beta subunit (540 aa).

Residues 270–347 (MTPRTLNVPR…IGYGFDKIKS (78 aa)) form the B5 domain. Positions 325, 331, 334, and 335 each coordinate Mg(2+).

It belongs to the phenylalanyl-tRNA synthetase beta subunit family. Type 2 subfamily. As to quaternary structure, tetramer of two alpha and two beta subunits. It depends on Mg(2+) as a cofactor.

It is found in the cytoplasm. The catalysed reaction is tRNA(Phe) + L-phenylalanine + ATP = L-phenylalanyl-tRNA(Phe) + AMP + diphosphate + H(+). In Methanococcoides burtonii (strain DSM 6242 / NBRC 107633 / OCM 468 / ACE-M), this protein is Phenylalanine--tRNA ligase beta subunit.